The sequence spans 81 residues: Small ribosomal subunit protein uS17 (81 aa).

It belongs to the universal ribosomal protein uS17 family. In terms of assembly, part of the 30S ribosomal subunit.

One of the primary rRNA binding proteins, it binds specifically to the 5'-end of 16S ribosomal RNA. This chain is Small ribosomal subunit protein uS17, found in Protochlamydia amoebophila (strain UWE25).